The chain runs to 1154 residues: MGLLLMILASAVLGSFLTLLAQFFLLYRRQPEPPADEAARAGEGFRYIKPVPGLLLREYLYGGGRDEEPSGAAPEGGATPTAAPETPAPPTRETCYFLNATILFLFRELRDTALTRRWVTKKIKVEFEELLQTKTAGRLLEGLSLRDVFLGETVPFIKTIRLVRPVVPSATGEPDGPEGEALPAACPEELAFEAEVEYNGGFHLAIDVDLVFGKSAYLFVKLSRVVGRLRLVFTRVPFTHWFFSFVEDPLIDFEVRSQFEGRPMPQLTSIIVNQLKKIIKRKHTLPNYKIRFKPFFPYQTLQGFEEDEEHIHIQQWALTEGRLKVTLLECSRLLIFGSYDREANVHCTLELSSSVWEEKQRSSIKTVELIKGNLQSVGLTLRLVQSTDGYAGHVIIETVAPNSPAAIADLQRGDRLIAIGGVKITSTLQVLKLIKQAGDRVLVYYERPVGQSNQGAVLQDNFGQLEENFLSSSCQSGYEEEAAGLTVDTESRELDSEFEDLASDVRAQNEFKDEAQSLSHSPKRVPTTLSIKPLGAISPVLNRKLAVGSHPLPPKIQSKDGNKPPPLKTSEITDPAQVSKPTQGSAFKPPVPPRPQAKVPLPSADAPNQAEPDVLVEKPEKVVPPPLVDKSAEKQAKNVDAIDDAAAPKQFLAKQEVAKDVTSETSCPTKDSSDDRQTWESSEILYRNKLGKWTRTRASCLFDIEACHRYLNIALWCRDPFKLGGLICLGHVSLKLEDVALGCLATSNTEYLSKLRLEAPSPKAIVTRTALRNLSMQKGFNDKFCYGDITIHFKYLKEGESDHHVVTNVEKEKEPHLVEEVSVLPKEEQFVGQMGLTENKHSFQDTQFQNPTWCDYCKKKVWTKAASQCMFCAYVCHKKCQEKCLAETSVCGATDRRIDRTLKNLRLEGQETLLGLPPRVDAEASKSVNKTTGLTRHIINTSSRLLNLRQVSKTRLSEPGTDLVEPSPKHTPNTSDNEGSDTEVCGPNSPSKRGNSTGIKLVRKEGGLDDSVFIAVKEIGRDLYRGLPTEERIQKLEFMLDKLQNEIDQELEHNNSLVREEKETTDTRKKSLLSAALAKSGERLQALTLLMIHYRAGIEDIETLESLSLDQHSKKISKYTDDTEEDLDNEISQLIDSQPFSSISDDLFGPSESV.

A helical membrane pass occupies residues 2 to 24 (GLLLMILASAVLGSFLTLLAQFF). Residues 66–90 (DEEPSGAAPEGGATPTAAPETPAPP) form a disordered region. A compositionally biased stretch (low complexity) spans 70-85 (SGAAPEGGATPTAAPE). Positions 91–294 (TRETCYFLNA…LPNYKIRFKP (204 aa)) constitute an SMP-LTD domain. Positions 366-449 (TVELIKGNLQ…RVLVYYERPV (84 aa)) constitute a PDZ domain. Phosphoserine is present on residues Ser496, Ser521, and Ser538. The segment at 548–612 (GSHPLPPKIQ…SADAPNQAEP (65 aa)) is disordered. The Phorbol-ester/DAG-type zinc finger occupies 840-891 (KHSFQDTQFQNPTWCDYCKKKVWTKAASQCMFCAYVCHKKCQEKCLAETSVC). A disordered region spans residues 955 to 999 (RLSEPGTDLVEPSPKHTPNTSDNEGSDTEVCGPNSPSKRGNSTGI). Phosphoserine is present on residues Ser967 and Ser980. Residues 988–998 (NSPSKRGNSTG) show a composition bias toward polar residues. Residues 1028 to 1063 (PTEERIQKLEFMLDKLQNEIDQELEHNNSLVREEKE) adopt a coiled-coil conformation. Residues 1132 to 1144 (SQLIDSQPFSSIS) show a composition bias toward polar residues. Positions 1132–1154 (SQLIDSQPFSSISDDLFGPSESV) are disordered.

As to quaternary structure, interacts with MSN. In terms of assembly, (Microbial infection) Interacts with HIV-1 Gag polyprotein p55.

The protein resides in the endoplasmic reticulum membrane. In terms of biological role, molecular tethering protein that connects endoplasmic reticulum and mitochondria membranes. PDZD8-dependent endoplasmic reticulum-mitochondria membrane tethering is essential for endoplasmic reticulum-mitochondria Ca(2+) transfer. In neurons, involved in the regulation of dendritic Ca(2+) dynamics by regulating mitochondrial Ca(2+) uptake in neurons. Plays an indirect role in the regulation of cell morphology and cytoskeletal organization. May inhibit herpes simplex virus 1 infection at an early stage. This chain is PDZ domain-containing protein 8, found in Homo sapiens (Human).